The primary structure comprises 500 residues: Glutamate decarboxylase 3 (500 aa).

A Phosphoserine modification is found at S8. Residue K277 is modified to N6-(pyridoxal phosphate)lysine.

This sequence belongs to the group II decarboxylase family. As to quaternary structure, homohexamer. Interacts with calmodulin. It depends on pyridoxal 5'-phosphate as a cofactor. In terms of tissue distribution, expressed at low levels in siliques.

The catalysed reaction is L-glutamate + H(+) = 4-aminobutanoate + CO2. Functionally, catalyzes the production of GABA. The calmodulin-binding is calcium-dependent and it is proposed that this may, directly or indirectly, form a calcium regulated control of GABA biosynthesis. This Arabidopsis thaliana (Mouse-ear cress) protein is Glutamate decarboxylase 3 (GAD3).